Reading from the N-terminus, the 1250-residue chain is DNA topoisomerase 3-alpha (1250 aa).

The region spanning 27–171 is the Toprim domain; that stretch reads KYLNVAEKND…NISVYRATFS (145 aa). Residues 189-610 form the Topo IA-type catalytic domain; it reads DKRQSDAVDV…EQIAKYKQAY (422 aa). Tyr356 acts as the O-(5'-phospho-DNA)-tyrosine intermediate in catalysis. Gly residues predominate over residues 769-835; the sequence is RGGGGGPGPG…GTGGGGLGGG (67 aa). 2 disordered regions span residues 769–899 and 953–1035; these read RGGG…GLDE and NGGT…TVLC. Positions 840-865 are enriched in basic and acidic residues; it reads PGGESKKSATKKPPNEPKPKKTKEPK. Over residues 866-886 the composition is skewed to low complexity; sequence AAPNKKTSSKSSGSIRSFFTS. The segment covering 956-965 has biased composition (polar residues); that stretch reads TMPTESNGDQ. 2 stretches are compositionally biased toward basic and acidic residues: residues 966-994 and 1012-1021; these read QLDK…RERA and PRWDSVERDS. The span at 1022–1033 shows a compositional bias: low complexity; it reads TPPSSVPESETV. Residues Cys1035, Cys1038, Cys1061, and Cys1067 each coordinate Zn(2+). The GRF-type 1 zinc-finger motif lies at 1035-1076; the sequence is CTGCQQPARQNTVRKNGPNLGRLYYKCPKPDECNFFQWADEP. The tract at residues 1069–1150 is disordered; it reads FFQWADEPPS…TATPGDGEEV (82 aa). Polar residues predominate over residues 1079–1101; the sequence is SAKSKNSTGSAPQSTTSWGSNRV. Low complexity predominate over residues 1106–1134; it reads SIQQSNSQRGQSSMRSNSSSTVTITQTKT. Cys1152, Cys1154, Cys1177, and Cys1184 together coordinate Zn(2+). The GRF-type 2 zinc finger occupies 1152 to 1193; that stretch reads CNCGQLASQLTVRKDGPNQGRPFYACPTREKSCGFFKWGDED. Residues 1188–1231 are disordered; that stretch reads KWGDEDQNQGASSTSWGSANRNPPGRSQPTAITSDGPKTRRCGL. Residues 1195–1220 are compositionally biased toward polar residues; that stretch reads NQGASSTSWGSANRNPPGRSQPTAIT.

Belongs to the type IA topoisomerase family.

The catalysed reaction is ATP-independent breakage of single-stranded DNA, followed by passage and rejoining.. Functionally, releases the supercoiling and torsional tension of DNA introduced during the DNA replication and transcription by transiently cleaving and rejoining one strand of the DNA duplex. Introduces a single-strand break via transesterification at a target site in duplex DNA. The scissile phosphodiester is attacked by the catalytic tyrosine of the enzyme, resulting in the formation of a DNA-(5'-phosphotyrosyl)-enzyme intermediate and the expulsion of a 3'-OH DNA strand. The free DNA strand than undergoes passage around the unbroken strand thus removing DNA supercoils. Finally, in the religation step, the DNA 3'-OH attacks the covalent intermediate to expel the active-site tyrosine and restore the DNA phosphodiester backbone. Weakly relaxes negative supercoils and displays a distinct preference for binding single-stranded DNA. This is DNA topoisomerase 3-alpha (Top3alpha) from Drosophila melanogaster (Fruit fly).